The following is a 401-amino-acid chain: MNKWLCCALLVFLDIIEWTTQETFPPKYLHYDPETGRQLLCDKCAPGTYLKQHCTVRRKTLCVPCPDYSYTDSWHTSDECVYCSPVCKELQTVKQECNRTHNRVCECEEGRYLELEFCLKHRSCPPGLGVLQAGTPERNTVCKRCPDGFFSGETSSKAPCRKHTNCSSLGLLLIQKGNATHDNVCSGNREATQNCGIDVTLCEEAFFRFAVPTKIIPNWLSVLVDSLPGTKVNAESVERIKRRHSSQEQTFQLLKLWKHQNRDQEMVKKIIQDIDLCESSVQRHIGHANLTTEQLRILMESLPGKKISPDEIERTRKTCKPSEQLLKLLSLWRIKNGDQDTLKGLMYALKHLKAYHFPKTVTHSLRKTIRFLHSFTMYRLYQKLFLEMIGNQVQSVKISCL.

The N-terminal stretch at 1–21 is a signal peptide; that stretch reads MNKWLCCALLVFLDIIEWTTQ. TNFR-Cys repeat units follow at residues 24-62, 65-105, 107-142, and 145-185; these read FPPK…KTLC, CPDY…NRVC, CEEG…NTVC, and CPDG…DNVC. Disulfide bonds link C41-C54, C44-C62, C65-C80, C83-C97, C87-C105, C107-C118, C124-C142, and C145-C160. N98 carries N-linked (GlcNAc...) asparagine glycosylation. N-linked (GlcNAc...) asparagine glycosylation is found at N165 and N178. Residues C166 and C185 are joined by a disulfide bond. Death domains follow at residues 198 to 269 and 270 to 365; these read DVTL…MVKK and IIQD…THSL. Residue N289 is glycosylated (N-linked (GlcNAc...) asparagine).

In terms of assembly, homodimer. Interacts with TNFSF10 and TNFSF11.

Its subcellular location is the secreted. In terms of biological role, acts as a decoy receptor for TNFSF11/RANKL and thereby neutralizes its function in osteoclastogenesis. Inhibits the activation of osteoclasts and promotes osteoclast apoptosis in vitro. Bone homeostasis seems to depend on the local ratio between TNFSF11 and TNFRSF11B. May also play a role in preventing arterial calcification. May act as decoy receptor for TNFSF10/TRAIL and protect against apoptosis. TNFSF10/TRAIL binding blocks the inhibition of osteoclastogenesis. The polypeptide is Tumor necrosis factor receptor superfamily member 11B (Tnfrsf11b) (Rattus norvegicus (Rat)).